The chain runs to 208 residues: Putative RING finger protein 413R (208 aa).

The interval 1-87 is disordered; that stretch reads MDAIFYPLPI…RHWSDDDSDR (87 aa). Acidic residues predominate over residues 22-71; it reads DFQEEDFQEEDFQEEDFQEEDFQEEDEDEEDEEVNEYPSDLDDEYPDSDY. Basic and acidic residues predominate over residues 72-82; the sequence is YDERSDRHWSD. A coiled-coil region spans residues 83–147; sequence DDSDRDLDDL…KLTTLSKNLT (65 aa). The segment at 148–196 adopts an RING-type zinc-finger fold; sequence CIICLTNQVQILTIPCGHLIMCNPCSLNLNNSVCTRGVNSNYEKCPKCR.

The chain is Putative RING finger protein 413R (EF2) from Acheta domesticus (House cricket).